We begin with the raw amino-acid sequence, 863 residues long: Ubiquitin carboxyl-terminal hydrolase 13 (863 aa).

Ser-114 is subject to Phosphoserine; by AURKB. Position 122 is a phosphothreonine (Thr-122). A UBP-type; degenerate zinc finger spans residues 187–295 (PVSKYANNLT…KHLAHFGIDM (109 aa)). Zn(2+) is bound by residues Cys-211, Cys-214, Cys-231, and His-244. Residue Lys-311 forms a Glycyl lysine isopeptide (Lys-Gly) (interchain with G-Cter in SUMO2) linkage. A USP domain is found at 336 to 861 (TGLKNLGNSC…LGYMYFYRRI (526 aa)). Cys-345 acts as the Nucleophile in catalysis. Lys-405 participates in a covalent cross-link: Glycyl lysine isopeptide (Lys-Gly) (interchain with G-Cter in SUMO2). UBA domains follow at residues 652–693 (DIDE…IIVH) and 727–767 (QPPE…IFSH). His-823 functions as the Proton acceptor in the catalytic mechanism.

Belongs to the peptidase C19 family. As to quaternary structure, interacts with UFD1. Interacts (via UBA domains) with SIAH2 (when ubiquitinated). Interacts with BAG6; the interaction is direct and may mediate UBL4A deubiquitination. Interacts (via UBA 2 domain) with AMFR; the interaction is direct. Interacts with UBL4A; may be indirect via BAG6. Interacts with NEDD4. Post-translationally, phosphorylated by AURKB at Ser-114; leading to stabilization of cell cycle proteins such as SKP2 and AURKB, but not MCL1. As to expression, highly expressed in ovary and testes.

The protein localises to the cytoplasm. The catalysed reaction is Thiol-dependent hydrolysis of ester, thioester, amide, peptide and isopeptide bonds formed by the C-terminal Gly of ubiquitin (a 76-residue protein attached to proteins as an intracellular targeting signal).. Its activity is regulated as follows. Specifically inhibited by spautin-1 (specific and potent autophagy inhibitor-1), a derivative of MBCQ that binds to USP13 and inhibits deubiquitinase activity. Regulated by PIK3C3/VPS34-containing complexes. The weak deubiquitinase activity in vitro suggests the existence of some mechanism that activates the enzyme. In terms of biological role, deubiquitinase that mediates deubiquitination of target proteins such as BECN1, MITF, SKP2 and USP10 and is involved in various processes such as autophagy, endoplasmic reticulum-associated degradation (ERAD), cell cycle progression or DNA damage response. Component of a regulatory loop that controls autophagy and p53/TP53 levels: mediates deubiquitination of BECN1, a key regulator of autophagy, leading to stabilize the PIK3C3/VPS34-containing complexes. Alternatively, forms with NEDD4 a deubiquitination complex, which subsequently stabilizes VPS34 to promote autophagy. Also deubiquitinates USP10, an essential regulator of p53/TP53 stability. In turn, PIK3C3/VPS34-containing complexes regulate USP13 stability, suggesting the existence of a regulatory system by which PIK3C3/VPS34-containing complexes regulate p53/TP53 protein levels via USP10 and USP13. Recruited by nuclear UFD1 and mediates deubiquitination of SKP2, thereby regulating endoplasmic reticulum-associated degradation (ERAD). Also regulates ERAD through the deubiquitination of UBL4A a component of the BAG6/BAT3 complex. Mediates stabilization of SIAH2 independently of deubiquitinase activity: binds ubiquitinated SIAH2 and acts by impairing SIAH2 autoubiquitination. Regulates the cell cycle progression by stabilizing cell cycle proteins such as SKP2 and AURKB. In addition, plays an important role in maintaining genomic stability and in DNA replication checkpoint activation via regulation of RAP80 and TOPBP1. Deubiquitinates the multifunctional protein HMGB1 and subsequently drives its nucleocytoplasmic localization and its secretion. Positively regulates type I and type II interferon signalings by deubiquitinating STAT1 but negatively regulates antiviral response by deubiquitinating STING1. The polypeptide is Ubiquitin carboxyl-terminal hydrolase 13 (USP13) (Homo sapiens (Human)).